A 713-amino-acid chain; its full sequence is Leucine-rich repeat-containing protein 4B (713 aa).

The N-terminal stretch at 1 to 35 (MARARGSPCPPLPPGRMSWPHGALLFLWLFSPPLG) is a signal peptide. Residues 36-576 (AGGGGVAVTS…DLDDVMKTTK (541 aa)) are Extracellular-facing. Positions 48 to 86 (GGGSPPATSCPVACSCSNQASRVICTRRDLAEVPASIPV) constitute an LRRNT domain. LRR repeat units follow at residues 87 to 108 (NTRY…TFKH), 111 to 132 (HLEI…AFNG), 135 to 156 (SLNT…AFEY), 159 to 180 (KLRE…AFNR), 183 to 205 (SLRR…AFEG), 208 to 229 (NLRY…TALV), 230 to 251 (RLEE…SFQG), 254 to 275 (SLRK…AFDD), and 278 to 299 (SLEE…LFTP). N224 is a glycosylation site (N-linked (GlcNAc...) asparagine). N-linked (GlcNAc...) asparagine glycans are attached at residues N283, N333, N374, N400, N422, N425, N444, and N452. In terms of domain architecture, LRRCT spans 311–363 (NPWHCNCDVLWLSWWLKETVPSNTTCCARCHAPAGLKGRYIGELDQSHFTCYA). Residues 364–452 (PVIVEPPTDL…GNTTASATLN (89 aa)) enclose the Ig-like C2-type domain. C385 and C436 are disulfide-bonded. The disordered stretch occupies residues 497–551 (TQPGEEALQPRGTEKEPPGPTTDGVWGGGRPGDAAGPASSSTTAPAPRSSRPTEK). Residues 528 to 546 (GDAAGPASSSTTAPAPRSS) are compositionally biased toward low complexity. Residues 577 to 597 (IIIGCFVAITFMAAVMLVAFY) traverse the membrane as a helical segment. At 598–713 (KLRKQHQLHK…SKENVQETQI (116 aa)) the chain is on the cytoplasmic side. S693 is modified (phosphoserine). Residues 694 to 713 (IHEPLLFKSGSKENVQETQI) form a disordered region. Over residues 703-713 (GSKENVQETQI) the composition is skewed to basic and acidic residues.

As to quaternary structure, interacts with PTPRF. Interacts with DLG4. N-glycosylated. O-glycosylated; contains sialic acid.

It is found in the membrane. It localises to the presynaptic cell membrane. In terms of biological role, synaptic adhesion protein. Regulates the formation of excitatory synapses. The trans-synaptic adhesion between LRRC4B and PTPRF regulates the formation of excitatory synapses in a bidirectional manner. This Homo sapiens (Human) protein is Leucine-rich repeat-containing protein 4B (LRRC4B).